A 287-amino-acid chain; its full sequence is U1 small nuclear ribonucleoprotein A (287 aa).

The region spanning 16-95 is the RRM 1 domain; it reads HTIYINNLNE…KPMRIQYAKT (80 aa). Lys-66 is subject to N6-acetyllysine. Residues 106–134 form a disordered region; the sequence is TYVERDRKREKRKPKSQETPAAKKAVQGG. Residues 125–134 show a composition bias toward low complexity; it reads PAAKKAVQGG. Arg-157 carries the post-translational modification Omega-N-methylarginine. Residues 213-287 enclose the RRM 2 domain; that stretch reads HILFLTNLPE…NAMKISFAKK (75 aa).

This sequence belongs to the RRM U1 A/B'' family. U1 snRNP is composed of the 7 core Sm proteins SNRPB, SNRPD1, SNRPD2, SNRPD3, SNRPE, SNRPF and SNRPG that assemble in a heptameric protein ring on the Sm site of the small nuclear RNA to form the core snRNP, and at least three U1 snRNP-specific proteins SNRNP70/U1-70K, SNRPA/U1-A and SNRPC/U1-C. Interacts with SFPQ; component of a snRNP-free complex with SFPQ. Interacts with IVNS1ABP (via BACK domain); the interaction is indirect.

The protein resides in the nucleus. In terms of biological role, component of the spliceosomal U1 snRNP, which is essential for recognition of the pre-mRNA 5' splice-site and the subsequent assembly of the spliceosome. U1 snRNP is the first snRNP to interact with pre-mRNA. This interaction is required for the subsequent binding of U2 snRNP and the U4/U6/U5 tri-snRNP. SNRPA binds stem loop II of U1 snRNA. In a snRNP-free form (SF-A) may be involved in coupled pre-mRNA splicing and polyadenylation process. May bind preferentially to the 5'-UGCAC-3' motif on RNAs. The sequence is that of U1 small nuclear ribonucleoprotein A (Snrpa) from Mus musculus (Mouse).